The chain runs to 253 residues: MNSYFEQASGFYGHPHQASGMAMGSGGHHDQTTASAAAAAYRGFTLPLGMSPYANHHLQRTTQDSPYDASITAACNKIYGDAGSAYKQDCLNIKADAVNGYKDIWNTGGANGGGGGGGGGAATAGNTSNGSNAPNAANGQNNAGGGGMPVRPSACTPDSRVGGYLDTSGGSPVSHRGGGSAGGGNGTAGGVPQNSASGVGGGVGAGTAWNANCTISGAAAAQTAAASSLHQPGNHTFYPWMAIAGESTADPIK.

Over residues 125-141 the composition is skewed to low complexity; that stretch reads GNTSNGSNAPNAANGQN. The tract at residues 125-193 is disordered; the sequence is GNTSNGSNAP…GNGTAGGVPQ (69 aa). Residues 176–189 show a composition bias toward gly residues; sequence RGGGSAGGGNGTAG. The short motif at 237–242 is the Antp-type hexapeptide element; sequence FYPWMA.

It belongs to the Antp homeobox family.

Its subcellular location is the nucleus. Functionally, sequence-specific transcription factor which is part of a developmental regulatory system that provides cells with specific positional identities on the anterior-posterior axis. Binds the consensus region 5'-TTAAT[GT][GA]-3'. This homeotic protein controls development of the cells in the posterior thoracic and first abdominal segments. It activates the synthesis of the decapentaplegic (DPP) growth factor. This Drosophila funebris (Fruit fly) protein is Homeotic protein ultrabithorax (Ubx).